The sequence spans 217 residues: Large ribosomal subunit protein uL3 (217 aa).

The tract at residues 135 to 154 (ATHGNSLSHRAPGSIGQCQT) is disordered. An N5-methylglutamine modification is found at Gln153.

This sequence belongs to the universal ribosomal protein uL3 family. In terms of assembly, part of the 50S ribosomal subunit. Forms a cluster with proteins L14 and L19. Post-translationally, methylated by PrmB.

Its function is as follows. One of the primary rRNA binding proteins, it binds directly near the 3'-end of the 23S rRNA, where it nucleates assembly of the 50S subunit. The chain is Large ribosomal subunit protein uL3 from Coxiella burnetii (strain CbuG_Q212) (Coxiella burnetii (strain Q212)).